We begin with the raw amino-acid sequence, 197 residues long: GTP cyclohydrolase-2 (197 aa).

49–53 (RVHSE) provides a ligand contact to GTP. Positions 54, 65, and 67 each coordinate Zn(2+). GTP contacts are provided by residues Gln-70, 92–94 (EGR), and Thr-114. The active-site Proton acceptor is the Asp-126. The active-site Nucleophile is Arg-128. GTP is bound by residues Thr-149 and Lys-154.

This sequence belongs to the GTP cyclohydrolase II family. Homodimer. Zn(2+) serves as cofactor.

It catalyses the reaction GTP + 4 H2O = 2,5-diamino-6-hydroxy-4-(5-phosphoribosylamino)-pyrimidine + formate + 2 phosphate + 3 H(+). The protein operates within cofactor biosynthesis; riboflavin biosynthesis; 5-amino-6-(D-ribitylamino)uracil from GTP: step 1/4. Functionally, catalyzes the conversion of GTP to 2,5-diamino-6-ribosylamino-4(3H)-pyrimidinone 5'-phosphate (DARP), formate and pyrophosphate. The polypeptide is GTP cyclohydrolase-2 (Cronobacter sakazakii (strain ATCC BAA-894) (Enterobacter sakazakii)).